A 235-amino-acid chain; its full sequence is Leucyl/phenylalanyl-tRNA--protein transferase (235 aa).

This sequence belongs to the L/F-transferase family.

It localises to the cytoplasm. The catalysed reaction is N-terminal L-lysyl-[protein] + L-leucyl-tRNA(Leu) = N-terminal L-leucyl-L-lysyl-[protein] + tRNA(Leu) + H(+). It carries out the reaction N-terminal L-arginyl-[protein] + L-leucyl-tRNA(Leu) = N-terminal L-leucyl-L-arginyl-[protein] + tRNA(Leu) + H(+). The enzyme catalyses L-phenylalanyl-tRNA(Phe) + an N-terminal L-alpha-aminoacyl-[protein] = an N-terminal L-phenylalanyl-L-alpha-aminoacyl-[protein] + tRNA(Phe). Its function is as follows. Functions in the N-end rule pathway of protein degradation where it conjugates Leu, Phe and, less efficiently, Met from aminoacyl-tRNAs to the N-termini of proteins containing an N-terminal arginine or lysine. This Shewanella frigidimarina (strain NCIMB 400) protein is Leucyl/phenylalanyl-tRNA--protein transferase.